We begin with the raw amino-acid sequence, 196 residues long: Holliday junction branch migration complex subunit RuvA (196 aa).

Residues 1 to 63 (MYDYIKGKLS…DDAHLLFGFH (63 aa)) form a domain I region. Residues 64 to 142 (TENEKEIFLN…EASGESATSR (79 aa)) form a domain II region. Residues 143–148 (KVSSEQ) are flexible linker. Residues 148–196 (QNSNLEEAMEALLALGYKATELKKVKAFFEGTNETVEQYIKSSLKMLMK) form a domain III region.

It belongs to the RuvA family. In terms of assembly, homotetramer. Forms an RuvA(8)-RuvB(12)-Holliday junction (HJ) complex. HJ DNA is sandwiched between 2 RuvA tetramers; dsDNA enters through RuvA and exits via RuvB. An RuvB hexamer assembles on each DNA strand where it exits the tetramer. Each RuvB hexamer is contacted by two RuvA subunits (via domain III) on 2 adjacent RuvB subunits; this complex drives branch migration. In the full resolvosome a probable DNA-RuvA(4)-RuvB(12)-RuvC(2) complex forms which resolves the HJ.

Its subcellular location is the cytoplasm. In terms of biological role, the RuvA-RuvB-RuvC complex processes Holliday junction (HJ) DNA during genetic recombination and DNA repair, while the RuvA-RuvB complex plays an important role in the rescue of blocked DNA replication forks via replication fork reversal (RFR). RuvA specifically binds to HJ cruciform DNA, conferring on it an open structure. The RuvB hexamer acts as an ATP-dependent pump, pulling dsDNA into and through the RuvAB complex. HJ branch migration allows RuvC to scan DNA until it finds its consensus sequence, where it cleaves and resolves the cruciform DNA. The polypeptide is Holliday junction branch migration complex subunit RuvA (Streptococcus agalactiae serotype III (strain NEM316)).